Reading from the N-terminus, the 410-residue chain is Tegument protein VP16 homolog (410 aa).

The interval 388–410 (PPSPSEILPGDPPRPPTCGFLTR) is disordered.

This sequence belongs to the herpesviridae tegument protein VP16 protein family. In terms of assembly, associates with the VP16-induced complex; binding to host HCFC1 activates VP16 for association with the octamer motif-binding host protein POU2F1, to form a multiprotein-DNA complex responsible for activating transcription of the viral immediate early genes.

It localises to the virion tegument. Its subcellular location is the host nucleus. Its function is as follows. Transcriptional activator of immediate-early (IE) gene products (alpha genes). Acts as a key activator of lytic infection by initiating the lytic program through the assembly of the transcriptional regulatory VP16-induced complex composed of VP16 and two cellular factors, HCFC1 and POU2F1. VP16-induced complex represents a regulatory switch: when it is on, it promotes IE-gene expression and thus lytic infection, and when it is off, it limits IE-gene transcription favoring latent infection. In terms of biological role, may play a role in the aggregation of tegument proteins around nucleocapsids during virus morphogenesis. In Varicella-zoster virus (strain Dumas) (HHV-3), this protein is Tegument protein VP16 homolog.